The primary structure comprises 599 residues: UPF0313 protein UNCMA_01890 (599 aa).

Residues 281 to 557 form the Radical SAM core domain; that stretch reads EDIPALRTVR…RALLQYKNPE (277 aa). [4Fe-4S] cluster contacts are provided by Cys299, Cys303, and Cys306.

It belongs to the UPF0313 family. The cofactor is [4Fe-4S] cluster.

In Methanocella arvoryzae (strain DSM 22066 / NBRC 105507 / MRE50), this protein is UPF0313 protein UNCMA_01890.